The chain runs to 270 residues: 4-hydroxy-tetrahydrodipicolinate reductase (270 aa).

Residues 8-13, Asp34, 102-104, and 128-131 contribute to the NAD(+) site; these read GALGRM, GTT, and SQNY. Residue His160 is the Proton donor/acceptor of the active site. His161 contributes to the (S)-2,3,4,5-tetrahydrodipicolinate binding site. Lys164 (proton donor) is an active-site residue. (S)-2,3,4,5-tetrahydrodipicolinate is bound at residue 170–171; that stretch reads GT.

This sequence belongs to the DapB family.

It is found in the cytoplasm. The catalysed reaction is (S)-2,3,4,5-tetrahydrodipicolinate + NAD(+) + H2O = (2S,4S)-4-hydroxy-2,3,4,5-tetrahydrodipicolinate + NADH + H(+). It carries out the reaction (S)-2,3,4,5-tetrahydrodipicolinate + NADP(+) + H2O = (2S,4S)-4-hydroxy-2,3,4,5-tetrahydrodipicolinate + NADPH + H(+). Its pathway is amino-acid biosynthesis; L-lysine biosynthesis via DAP pathway; (S)-tetrahydrodipicolinate from L-aspartate: step 4/4. Functionally, catalyzes the conversion of 4-hydroxy-tetrahydrodipicolinate (HTPA) to tetrahydrodipicolinate. The protein is 4-hydroxy-tetrahydrodipicolinate reductase of Methanococcus maripaludis (strain C7 / ATCC BAA-1331).